A 60-amino-acid chain; its full sequence is Single-pass membrane and coiled-coil domain-containing protein 4 homolog (60 aa).

Positions 1-22 (MRKLRGGQTRETRKQKQERREE) are disordered. Basic and acidic residues predominate over residues 8–22 (QTRETRKQKQERREE). Residues 8–34 (QTRETRKQKQERREENQKIQQQLKTIV) are a coiled coil. The helical transmembrane segment at 30 to 50 (LKTIVLPICGVVFLCIVAYVF) threads the bilayer.

This sequence belongs to the SMCO4 family.

The protein resides in the membrane. The sequence is that of Single-pass membrane and coiled-coil domain-containing protein 4 homolog from Culex quinquefasciatus (Southern house mosquito).